The primary structure comprises 153 residues: Peritrophin-1 (153 aa).

A signal peptide spans 1 to 17 (MKVSASLVLLLAAAVLA). 2 consecutive Chitin-binding type-2 domains span residues 18 to 79 (DDRC…QCAP) and 92 to 153 (SPNC…QCEE). 2 disulfides stabilise this stretch: C56–C69 and C130–C143. N63 is a glycosylation site (N-linked (GlcNAc...) asparagine).

Post-translationally, glycosylated. Adult peritrophic membrane.

In terms of biological role, binds chitin but not cellulose. May be involved in the spatial organization of PM. The chain is Peritrophin-1 (Aper1) from Anopheles gambiae (African malaria mosquito).